We begin with the raw amino-acid sequence, 79 residues long: Beta-defensin 130 (79 aa).

A signal peptide spans 1-22; that stretch reads MKLHSLISVLLLFVTLIPKGKT. Disulfide bonds link Cys38/Cys53 and Cys43/Cys60.

Belongs to the beta-defensin family.

The protein localises to the secreted. Functionally, antimicrobial host-defense peptide. The sequence is that of Beta-defensin 130 from Pan troglodytes (Chimpanzee).